We begin with the raw amino-acid sequence, 857 residues long: Dynein regulatory complex protein 11 (857 aa).

Residues 206–235 (TKLAALQIQKVWRGFHQCKKTVKEREEEMV) form the IQ domain. The tract at residues 348-388 (EEKLKKKKKKEDKENKGKKGKKEKKEKKEKKVSLKEKAMKD) is disordered. Residues 365–375 (KKGKKEKKEKK) are compositionally biased toward basic residues. Positions 376–387 (EKKVSLKEKAMK) are enriched in basic and acidic residues. ATP is bound at residue 598–605 (GPSGVGKK). Positions 834–857 (SLTVGNKEKEKDKGKKGKRGKKKK) are disordered. A compositionally biased stretch (basic residues) spans 847-857 (GKKGKRGKKKK).

This sequence belongs to the AAA ATPase family. DRC11 subfamily. As to quaternary structure, component of the nexin-dynein regulatory complex (N-DRC).

It localises to the cytoplasm. The protein resides in the cytoskeleton. Its subcellular location is the flagellum axoneme. Functionally, component of the nexin-dynein regulatory complex (N-DRC), a key regulator of ciliary/flagellar motility which maintains the alignment and integrity of the distal axoneme and regulates microtubule sliding in motile axonemes. The polypeptide is Dynein regulatory complex protein 11 (Iqca1) (Mus musculus (Mouse)).